The primary structure comprises 419 residues: Lipid II:glycine glycyltransferase (419 aa).

The protein belongs to the FemABX family.

It is found in the cytoplasm. The catalysed reaction is beta-D-GlcNAc-(1-&gt;4)-Mur2Ac(oyl-L-Ala-D-isoglutaminyl-L-Lys-D-Ala-D-Ala)-di-trans,octa-cis-undecaprenyl diphosphate + glycyl-tRNA(Gly) = beta-D-GlcNAc-(1-&gt;4)-Mur2Ac(oyl-L-Ala-D-isoglutaminyl-L-Lys-(N(6)-Gly)-D-Ala-D-Ala)-di-trans,octa-cis-undecaprenyl diphosphate + tRNA(Gly) + H(+). Functionally, catalyzes the incorporation of amino acid(s) into the interchain peptide bridge of peptidoglycan, using aminoacyl-tRNA as amino acid donor. The polypeptide is Lipid II:glycine glycyltransferase (femX) (Staphylococcus haemolyticus (strain JCSC1435)).